Here is a 426-residue protein sequence, read N- to C-terminus: Colanic acid biosynthesis protein WcaK (426 aa).

It belongs to the polysaccharide pyruvyl transferase family.

It functions in the pathway slime biogenesis; slime polysaccharide biosynthesis. This is Colanic acid biosynthesis protein WcaK (wcaK) from Escherichia coli (strain K12).